The following is a 377-amino-acid chain: MSHGIVIIGSGFAARQLVKNIRKQDANVPLTLIAADSMDEYNKPDLSHVISQSQRADDLTRQTAGEFAEQFHLRLFPYTRVTDIDAAAHCVKAKDKQWHYDKLVLATGASAFVPLIEGHELMLTLNSQQEYKACETRLRDAQRVMIVGGGLIGTELAMDFCRAGKSVTLVDHAARILSALMPAEVSSRLQHRLTDMGVHQLLKSQLQSLTKTDTGIRATLDRNRSVEIDVVVAATGLRPETALARRAGAETHLGVKVDSYLQTTQPDIYALGDCAEINGQVLPFLQPIQISAMYLAKNLLGTSTPLKLPTMLVKVKTPELPLHLAGETQRQDLNWQITLETQGMVARGMDNDGQLRAFVVSEDRMKEAFALLKSLPV.

It belongs to the FAD-dependent oxidoreductase family. The cofactor is FAD.

It localises to the cytoplasm. It catalyses the reaction 2 reduced [nitric oxide reductase rubredoxin domain] + NAD(+) + H(+) = 2 oxidized [nitric oxide reductase rubredoxin domain] + NADH. The protein operates within nitrogen metabolism; nitric oxide reduction. Its function is as follows. One of at least two accessory proteins for anaerobic nitric oxide (NO) reductase. Reduces the rubredoxin moiety of NO reductase. The protein is Nitric oxide reductase FlRd-NAD(+) reductase of Enterobacter sp. (strain 638).